Reading from the N-terminus, the 805-residue chain is N-(5-amino-5-carboxypentanoyl)-L-cysteinyl-D-valine synthase (805 aa).

Positions 783-805 (PDTGGGAVGSTTTGGVRGELREI) are disordered.

The protein belongs to the ATP-dependent AMP-binding enzyme family. Pantetheine 4'-phosphate serves as cofactor.

The enzyme catalyses L-2-aminoadipate + L-valine + L-cysteine + 3 ATP + H2O = N-[(5S)-5-amino-5-carboxypentanoyl]-L-cysteinyl-D-valine + 3 AMP + 3 diphosphate + 3 H(+). The protein operates within antibiotic biosynthesis; penicillin G biosynthesis; penicillin G from L-alpha-aminoadipate and L-cysteine and L-valine: step 1/3. Each of the constituent amino acids of ACV are activated as aminoacyl-adenylates with peptide bonds formed through the participation of amino acid thioester intermediates. This Streptomyces clavuligerus protein is N-(5-amino-5-carboxypentanoyl)-L-cysteinyl-D-valine synthase (pcbAB).